Reading from the N-terminus, the 263-residue chain is HTH-type transcriptional repressor NanR (263 aa).

Positions methionine 1–arginine 25 are disordered. The HTH gntR-type domain maps to lysine 30–proline 98. The H-T-H motif DNA-binding region spans glutamate 58–alanine 77.

Belongs to the NanR family.

In terms of biological role, transcriptional repressor that controls expression of the genes required for the catabolism of sialic acids. The sequence is that of HTH-type transcriptional repressor NanR from Salmonella choleraesuis (strain SC-B67).